We begin with the raw amino-acid sequence, 53 residues long: Sec-independent protein translocase protein TatA (53 aa).

A helical transmembrane segment spans residues 1-21 (MGMSLSHLLIVLLIIFVLFGA).

The protein belongs to the TatA/E family. In terms of assembly, the Tat system comprises two distinct complexes: a TatABC complex, containing multiple copies of TatA, TatB and TatC subunits, and a separate TatA complex, containing only TatA subunits. Substrates initially bind to the TatABC complex, which probably triggers association of the separate TatA complex to form the active translocon.

The protein localises to the cell inner membrane. Its function is as follows. Part of the twin-arginine translocation (Tat) system that transports large folded proteins containing a characteristic twin-arginine motif in their signal peptide across membranes. TatA could form the protein-conducting channel of the Tat system. The chain is Sec-independent protein translocase protein TatA from Rickettsia conorii (strain ATCC VR-613 / Malish 7).